Here is a 350-residue protein sequence, read N- to C-terminus: C5a anaphylatoxin chemotactic receptor 1 (350 aa).

The Extracellular segment spans residues methionine 1–histidine 37. Residue asparagine 17 is glycosylated (N-linked (GlcNAc...) asparagine). Residues leucine 38–phenylalanine 64 traverse the membrane as a helical segment. At arginine 65–serine 69 the chain is on the cytoplasmic side. The chain crosses the membrane as a helical span at residues valine 70–methionine 93. Topologically, residues valine 94 to lysine 110 are extracellular. Cysteine 109 and cysteine 187 are oxidised to a cystine. The helical transmembrane segment at leucine 111–leucine 132 threads the bilayer. Over aspartate 133 to glycine 154 the chain is Cytoplasmic. The chain crosses the membrane as a helical span at residues tryptophan 155–tyrosine 174. Topologically, residues valine 175–tryptophan 197 are extracellular. The helical transmembrane segment at alanine 198 to tyrosine 223 threads the bilayer. Over serine 224 to arginine 247 the chain is Cytoplasmic. A helical transmembrane segment spans residues valine 248–valine 270. Residues leucine 271 to histidine 287 lie on the Extracellular side of the membrane. The chain crosses the membrane as a helical span at residues threonine 288–leucine 308. Residues glycine 309–methionine 350 lie on the Cytoplasmic side of the membrane.

Belongs to the G-protein coupled receptor 1 family. High expression in head, kidney and posterior kidney, lower levels in peripheral blood leukocytes and spleen, low expression in brain and gills, heart, intestine and very low expression in liver and muscle.

Its subcellular location is the cell membrane. In terms of biological role, receptor for the chemotactic and inflammatory peptide anaphylatoxin C5a. This receptor stimulates chemotaxis, granule enzyme release and superoxide anion production. This chain is C5a anaphylatoxin chemotactic receptor 1 (c5ar1), found in Oncorhynchus mykiss (Rainbow trout).